The sequence spans 856 residues: Alginate lyase 7 (856 aa).

PbH1 repeat units follow at residues 133–155 (DYNV…DPHE), 157–179 (TINL…VADF), 180–202 (QIGA…NIVT), 204–226 (SHDI…VVQR), 234–256 (VYNV…LIKM), 257–279 (STDV…RVQG), 280–304 (VEDV…EVIV), and 320–342 (TQNV…GIQE). 9 Hemolysin-type calcium-binding repeats span residues 387–402 (GSTG…IADL), 404–421 (VGGS…NDVL), 422–439 (EGGA…ADIF), 538–549 (GTEGDDSLTGNA), 554–563 (LDGGSGNDSL), 565–581 (GGLG…DDIL), 582–599 (NGGL…ADIF), 715–731 (GGAG…DDIL), and 733–749 (GGSE…ADVF).

Belongs to the D-mannuronate C5-epimerase family. Requires Ca(2+) as cofactor.

The protein localises to the secreted. The catalysed reaction is Eliminative cleavage of alginate to give oligosaccharides with 4-deoxy-alpha-L-erythro-hex-4-enuronosyl groups at their non-reducing ends and beta-D-mannuronate at their reducing end.. It catalyses the reaction [(1-&gt;4)-beta-D-mannuronosyl](n) = [alginate](n). Its pathway is glycan biosynthesis; alginate biosynthesis. Inhibited by zinc. Functionally, converts beta-D-mannuronic acid (M) to alpha-L-guluronic acid (G). Has both epimerase and lyase activities. Contributes to abortive encystment by degrading the coat from inside the cyst. Important for cyst germination. In Azotobacter vinelandii, this protein is Alginate lyase 7.